An 84-amino-acid chain; its full sequence is Putative defensin-like protein 165 (84 aa).

The signal sequence occupies residues 1-27 (MSTKLFSYFMLLVVLFSVLTIIPKTEA). Cystine bridges form between Cys-31/Cys-78, Cys-41/Cys-60, Cys-46/Cys-72, and Cys-50/Cys-74.

The protein belongs to the DEFL family.

It localises to the secreted. The polypeptide is Putative defensin-like protein 165 (LCR12) (Arabidopsis thaliana (Mouse-ear cress)).